The primary structure comprises 252 residues: Trans-aconitate 2-methyltransferase (252 aa).

It belongs to the methyltransferase superfamily. Tam family.

Its subcellular location is the cytoplasm. It carries out the reaction trans-aconitate + S-adenosyl-L-methionine = (E)-3-(methoxycarbonyl)pent-2-enedioate + S-adenosyl-L-homocysteine. Its function is as follows. Catalyzes the S-adenosylmethionine monomethyl esterification of trans-aconitate. The polypeptide is Trans-aconitate 2-methyltransferase (Escherichia coli O9:H4 (strain HS)).